Consider the following 578-residue polypeptide: MSILNEPQGASAAEDSYENELPVRRKQPGNVVIKWLTTTDHKTIGTMYLVTSFAFFVIGGVMALFMRAELARPGLQIMSNEQFNQAFTMHGTIMLLMFATPLFAGFANWIMPLQIGAPDVAFPRLNMFAYWLYLFGSTIAVGGFLTPQGAADFGWFAYSPLSDAVHSPGIGGDLWIMGLAFSGFGTILGSVNFITTIICMRAPGMTMFRMPIFTWNVLLTGVLVLLAFPVLAAALFALEADRKFGAHIFDSSNGGALLWQHLFWFFGHPEVYIIALPFFGIVSEIIPVFSRKPIFGYMGLIGATIAIAGLSVTVWAHHMYVTGGVLLPFFSFMTFLIAVPTGVKFFNWIGTMWKGSLSFETPMLWSTGFLITFLFGGLTGVILASPPLDFHVSDSYFVVAHFHYVVFGTVVFAMFAGFHFWWPKFTGKMLDERLGKITFWTLFVGFHGTFLVQHWLGAEGMPRRYADYLAADGFTALNTISTISSFLLGMSILPFFYNIWKTAKYGKKIEVDDPWGYGRSLEWATSCPPPRHNFLTLPRIRSESPAFDLHHPEISAIDQLENVGHGEKALAGGKEAGK.

The disordered stretch occupies residues 1–21; it reads MSILNEPQGASAAEDSYENEL. A helical transmembrane segment spans residues 44–64; it reads IGTMYLVTSFAFFVIGGVMAL. Residue H90 coordinates Fe(II)-heme a. 6 consecutive transmembrane segments (helical) span residues 93–113, 125–145, 174–194, 217–237, 262–282, and 294–314; these read IMLL…IMPL, LNMF…GGFL, LWIM…VNFI, VLLT…ALFA, LFWF…FGIV, and IFGY…SVTV. Positions 268 and 272 each coordinate Cu cation. The 1'-histidyl-3'-tyrosine (His-Tyr) cross-link spans 268–272; it reads HPEVY. 2 residues coordinate Cu cation: H317 and H318. Transmembrane regions (helical) follow at residues 319-339 and 363-383; these read MYVT…LIAV and MLWS…GVIL. Residue H401 coordinates heme a3. Helical transmembrane passes span 402–422, 437–457, and 480–500; these read FHYV…HFWW, ITFW…HWLG, and ISTI…YNIW. Residue H403 participates in Fe(II)-heme a binding.

The protein belongs to the heme-copper respiratory oxidase family. In terms of assembly, associates with subunits II, III and IV to form cytochrome c oxidase. Cu(2+) serves as cofactor. Heme is required as a cofactor.

The protein resides in the cell membrane. It catalyses the reaction 4 Fe(II)-[cytochrome c] + O2 + 8 H(+)(in) = 4 Fe(III)-[cytochrome c] + 2 H2O + 4 H(+)(out). Its pathway is energy metabolism; oxidative phosphorylation. In terms of biological role, cytochrome c oxidase is the component of the respiratory chain that catalyzes the reduction of oxygen to water. Subunits 1-3 form the functional core of the enzyme complex. CO I is the catalytic subunit of the enzyme. Electrons originating in cytochrome c are transferred via the copper A center of subunit 2 and heme A of subunit 1 to the bimetallic center formed by heme A3 and copper B. The protein is Probable cytochrome c oxidase subunit 1-alpha (ctaD1) of Streptomyces coelicolor (strain ATCC BAA-471 / A3(2) / M145).